We begin with the raw amino-acid sequence, 179 residues long: Fucolectin-4 (179 aa).

The N-terminal stretch at 1-23 (MEVKTIMLLFQILAISTLKQGSA) is a signal peptide. Residues 31–179 (EENVALRGRA…VEVNALLPVN (149 aa)) form an F5/8 type C-like region. The Ca(2+) site is built by Asn58, Asp61, Asn63, and Ser72. 3 disulfides stabilise this stretch: Cys73/Cys168, Cys104/Cys105, and Cys130/Cys146. His75 and Arg101 together coordinate alpha-L-fucose. Residues 101-103 (RGD) carry the Cell attachment site motif. Residue Arg108 participates in alpha-L-fucose binding. Residues Cys168 and Glu169 each contribute to the Ca(2+) site.

It belongs to the fucolectin family. Homotrimer. As to expression, gill mucous cells.

Its subcellular location is the secreted. Its function is as follows. Acts as a defensive agent. Recognizes blood group fucosylated oligosaccharides including A, B, H and Lewis B-type antigens. Does not recognize Lewis A antigen and has low affinity for monovalent haptens. This chain is Fucolectin-4, found in Anguilla japonica (Japanese eel).